We begin with the raw amino-acid sequence, 355 residues long: uncharacterized protein (355 aa).

The protein belongs to the ycf89 family.

Its subcellular location is the plastid. It localises to the chloroplast. This is an uncharacterized protein from Trieres chinensis (Marine centric diatom).